The chain runs to 37 residues: Putative preoptic regulatory factor 1 (37 aa).

2 propeptides span residues 1-7 and 18-37; these read MPYSLQP and FPLCMYMVRGSTWTLVPPDL.

Belongs to the GnRH family. Preoptic area and testis.

Its subcellular location is the secreted. Its function is as follows. Precursor for a gonadotropin regulatory hormone (GNRH) related decapeptide. The sequence is that of Putative preoptic regulatory factor 1 (Porf1) from Rattus norvegicus (Rat).